Consider the following 280-residue polypeptide: MIGIIGGTGIYEMAEYGRLERRGSLITPYGKTPEISVFKLHGRRVAFIPRHSPGHDKPPHMVNYRANIWALKELGVRQIIATNAVGSLKRSIGPGDFVVPHDFLDFTRSRPSTFYDEKTVHVDMTEPYCRNIRSALSGSSGVVDGGVYVCTEGPRFETPAEIRMFQTLGGTVVGMTGLPEAVLARELEMCYASICLVSNYAASISPSKLTIDEVFEIMDEKKNDLIDIIDAAIRDLKTEQSCPCQHALRGADVNNHEEELYEGFNDICKPEKEEQHHDGP.

Residues T8 and 50–51 (RH) each bind phosphate. Position 175 (M175) interacts with substrate. Residue T176 participates in phosphate binding. 199 to 201 (NYA) contributes to the substrate binding site.

Belongs to the PNP/MTAP phosphorylase family. MTAP subfamily. In terms of assembly, homotrimer.

The catalysed reaction is S-methyl-5'-thioinosine + phosphate = 5-(methylsulfanyl)-alpha-D-ribose 1-phosphate + hypoxanthine. The protein operates within purine metabolism; purine nucleoside salvage. Its function is as follows. Catalyzes the reversible phosphorylation of S-methyl-5'-thioinosine (MTI) to hypoxanthine and 5-methylthioribose-1-phosphate. Involved in the breakdown of S-methyl-5'-thioadenosine (MTA), a major by-product of polyamine biosynthesis. Catabolism of (MTA) occurs via deamination to MTI and phosphorolysis to hypoxanthine. This Methanothermobacter thermautotrophicus (strain ATCC 29096 / DSM 1053 / JCM 10044 / NBRC 100330 / Delta H) (Methanobacterium thermoautotrophicum) protein is Probable S-methyl-5'-thioinosine phosphorylase.